The chain runs to 236 residues: Protein INCA1 (236 aa).

S23 carries the phosphoserine modification. Positions 75–99 (GLYPPEQLPPPEMLWRRKKRRPCLE) are interaction with CCNA1 and CCNA1/CDK2 complex; essential for CDK2 inhibitory activity. The Nuclear localization signal motif lies at 90–95 (RRKKRR). T182 carries the post-translational modification Phosphothreonine. Phosphoserine occurs at positions 191 and 194.

It belongs to the INCA family. Interacts with CCNA1. Interacts with CCNA2, CCNB1 and CCNE1. Found in a complex with CCNA1 and CDK2. Interacts with ZNF16; the interaction inhibits INCA1 activity and induces the cell cycle process. Interacts with SPACA9. Interacts with the CCNA1/CDK2 complex. Interacts with ING5, DAZAP2, RNF26, USP15, SPOUT1, DPH7, TRIM26 and RAB5C. Post-translationally, phosphorylated when part of a complex with CCNA1 and CDK2. Strongly phosphorylated by CDK2 on its C-terminal region spanning amino acid 149-221. Less intensively phosphorylated by CDK2 on its first 75 amino acid residues. Detected in testis, and at lower levels in ovary. Detected at very low levels in testis tumors. Down-regulated in bone marrow cells in acute myeloid and lymphoid leukemia patients as compared with normal bone marrow cells.

The protein resides in the nucleus. It is found in the cytoplasm. Its function is as follows. Binds to CDK2-bound cyclins and inhibits the kinase activity of CDK2; binding to cyclins is critical for its function as CDK inhibitor. Inhibits cell growth and cell proliferation and may play a role in cell cycle control. Required for ING5-mediated regulation of S-phase progression, enhancement of Fas-induced apoptosis and inhibition of cell growth. The protein is Protein INCA1 (INCA1) of Homo sapiens (Human).